The chain runs to 133 residues: MRHKYRKGSSFERELKRLLEKEGFAVIRSAGSKGVDLIAGRKGEVLIFECKTSSKTKFYINKEDIEKLISFSEIFGGKPYLAIKFNGEMLFINPFLLSTNGKNYVIDERIKAIAIDFYEVIGRGKQLKIDDLI.

Mg(2+) is bound at residue Glu-12. Ser-32 is an active-site residue. Residues Asp-36 and Glu-49 each contribute to the Mg(2+) site.

This sequence belongs to the Holliday junction resolvase Hjc family. As to quaternary structure, homodimer. Requires Mg(2+) as cofactor.

It carries out the reaction Endonucleolytic cleavage at a junction such as a reciprocal single-stranded crossover between two homologous DNA duplexes (Holliday junction).. A structure-specific endonuclease that resolves Holliday junction (HJ) intermediates during genetic recombination. Cleaves 4-way DNA junctions introducing paired nicks in opposing strands, leaving a 5'-terminal phosphate and a 3'-terminal hydroxyl group that are subsequently ligated to produce recombinant products. This chain is Crossover junction endodeoxyribonuclease Hjc, found in Methanocaldococcus jannaschii (strain ATCC 43067 / DSM 2661 / JAL-1 / JCM 10045 / NBRC 100440) (Methanococcus jannaschii).